The primary structure comprises 473 residues: Kremen protein 1 (473 aa).

A signal peptide spans 1–19; the sequence is MAPPAARLALLSAAALTLA. The Extracellular segment spans residues 21–392; that stretch reads RPAPGPRSGP…ANSHRVEGWT (372 aa). The region spanning 31–114 is the Kringle domain; sequence ECFTANGADY…YWKYCEIPAC (84 aa). Disulfide bonds link cysteine 32-cysteine 114, cysteine 55-cysteine 95, cysteine 84-cysteine 109, cysteine 122-cysteine 186, cysteine 147-cysteine 167, cysteine 151-cysteine 169, cysteine 190-cysteine 198, and cysteine 214-cysteine 240. An N-linked (GlcNAc...) asparagine glycan is attached at asparagine 59. The WSC domain maps to 116–210; the sequence is MPGNLGCYKD…DGRIILFDTL (95 aa). The CUB domain maps to 214–321; sequence CGGNYSAMAA…QGFAVLYQAT (108 aa). N-linked (GlcNAc...) asparagine glycosylation is found at asparagine 217, asparagine 255, asparagine 293, asparagine 333, and asparagine 345. A helical transmembrane segment spans residues 393–413; it reads VYGLATLLILTVTAVVAKILL. Topologically, residues 414–473 are cytoplasmic; that stretch reads HVTFKSHRVPASGDLRDCRQPGASGDIWTIFYEPSTTISIFKKKLKGQSQQDDRNPLVSD. The segment at 414 to 473 is essential for apoptotic activity; sequence HVTFKSHRVPASGDLRDCRQPGASGDIWTIFYEPSTTISIFKKKLKGQSQQDDRNPLVSD.

As to quaternary structure, forms a ternary complex with DKK1 and LRP6. Interacts with LRP6 in a DKK1-dependent manner. Interacts with DKK1 and RSPO1 (via FU repeats). In the adult, widely expressed with high levels in heart, lung, kidney, skeletal muscle and testis.

The protein localises to the cell membrane. Its function is as follows. Receptor for Dickkopf proteins. Cooperates with DKK1/2 to inhibit Wnt/beta-catenin signaling by promoting the endocytosis of Wnt receptors LRP5 and LRP6. In the absence of DKK1, potentiates Wnt-beta-catenin signaling by maintaining LRP5 or LRP6 at the cell membrane. Can trigger apoptosis in a Wnt-independent manner and this apoptotic activity is inhibited upon binding of the ligand DKK1. Plays a role in limb development; attenuates Wnt signaling in the developing limb to allow normal limb patterning and can also negatively regulate bone formation. Modulates cell fate decisions in the developing cochlea with an inhibitory role in hair cell fate specification. The protein is Kremen protein 1 (Kremen1) of Mus musculus (Mouse).